A 458-amino-acid polypeptide reads, in one-letter code: UDP-N-acetylmuramoylalanine--D-glutamate ligase (458 aa).

Gly-124 to Thr-130 contacts ATP.

Belongs to the MurCDEF family.

The protein localises to the cytoplasm. It carries out the reaction UDP-N-acetyl-alpha-D-muramoyl-L-alanine + D-glutamate + ATP = UDP-N-acetyl-alpha-D-muramoyl-L-alanyl-D-glutamate + ADP + phosphate + H(+). It functions in the pathway cell wall biogenesis; peptidoglycan biosynthesis. Functionally, cell wall formation. Catalyzes the addition of glutamate to the nucleotide precursor UDP-N-acetylmuramoyl-L-alanine (UMA). The sequence is that of UDP-N-acetylmuramoylalanine--D-glutamate ligase from Clostridium botulinum (strain Okra / Type B1).